The chain runs to 475 residues: Aspartyl/glutamyl-tRNA(Asn/Gln) amidotransferase subunit B (475 aa).

The protein belongs to the GatB/GatE family. GatB subfamily. In terms of assembly, heterotrimer of A, B and C subunits.

The enzyme catalyses L-glutamyl-tRNA(Gln) + L-glutamine + ATP + H2O = L-glutaminyl-tRNA(Gln) + L-glutamate + ADP + phosphate + H(+). It catalyses the reaction L-aspartyl-tRNA(Asn) + L-glutamine + ATP + H2O = L-asparaginyl-tRNA(Asn) + L-glutamate + ADP + phosphate + 2 H(+). Functionally, allows the formation of correctly charged Asn-tRNA(Asn) or Gln-tRNA(Gln) through the transamidation of misacylated Asp-tRNA(Asn) or Glu-tRNA(Gln) in organisms which lack either or both of asparaginyl-tRNA or glutaminyl-tRNA synthetases. The reaction takes place in the presence of glutamine and ATP through an activated phospho-Asp-tRNA(Asn) or phospho-Glu-tRNA(Gln). This chain is Aspartyl/glutamyl-tRNA(Asn/Gln) amidotransferase subunit B, found in Chlorobium phaeobacteroides (strain DSM 266 / SMG 266 / 2430).